The sequence spans 261 residues: Lysoplasmalogenase (261 aa).

The next 8 helical transmembrane spans lie at 29–49, 65–85, 90–107, 111–133, 146–166, 172–192, 197–217, and 227–247; these read GWVVAGWAGLAYGVYLTVIAL, PAFKASMAVLLAAAAVAHPIG, WLVPALLLSATGDWLLAI, TWAFVFGLGAFLLAHLCFIGALL, VAAVVAMCVASAGLLVWFWPH, LTIPVTVYIVALSAMVCTALL, TIWTAVGAVCFAASDSMIGIG, and AVPIWWSYAAAEILITAGFFF.

This sequence belongs to the TMEM86 family.

It localises to the cell membrane. It carries out the reaction a 1-O-(1Z-alkenyl)-sn-glycero-3-phosphocholine + H2O = a 2,3-saturated aldehyde + sn-glycerol 3-phosphocholine. The enzyme catalyses a 1-O-(1Z-alkenyl)-sn-glycero-3-phosphoethanolamine + H2O = a 2,3-saturated aldehyde + sn-glycero-3-phosphoethanolamine. In terms of biological role, specifically hydrolyzes the vinyl ether bond of lysoplasmenylcholine (pLPC) and lysoplasmenylethanolamine (pLPE) to release a fatty aldehyde and glycerophospho-choline or glycerophospho-ethanolamine. The chain is Lysoplasmalogenase from Mycobacterium bovis (strain ATCC BAA-935 / AF2122/97).